Here is an 88-residue protein sequence, read N- to C-terminus: Acyl-CoA-binding protein homolog (88 aa).

The ACB domain maps to 3–88; sequence PQADFDKAAG…AHELIEKYGL (86 aa). An acyl-CoA is bound by residues K15, 30 to 34, K52, K56, and Y75; that span reads YGLYK.

This sequence belongs to the ACBP family. In terms of tissue distribution, brain. Is selectively expressed in glial cells.

It localises to the endoplasmic reticulum. The protein localises to the golgi apparatus. Functionally, may play important functions in the control of brain and pituitary activities. May regulate GABA neurotransmission through a paracrine and/or autocrine mechanism. May not bind acyl-CoA esters. The chain is Acyl-CoA-binding protein homolog from Pelophylax ridibundus (Marsh frog).